We begin with the raw amino-acid sequence, 199 residues long: DnaJ homolog subfamily C member 5B (199 aa).

A phosphoserine mark is found at Ser-14 and Ser-16. The J domain maps to Ala-19–Gly-84.

As to quaternary structure, interacts with the chaperone complex consisting of HSC70 and SGTA. In terms of processing, palmitoylated.

Its subcellular location is the membrane. The polypeptide is DnaJ homolog subfamily C member 5B (DNAJC5B) (Ailuropoda melanoleuca (Giant panda)).